The following is a 625-amino-acid chain: 1-deoxy-D-xylulose-5-phosphate synthase (625 aa).

Thiamine diphosphate contacts are provided by residues His80 and 121-123; that span reads GHS. Residue Asp152 participates in Mg(2+) binding. Thiamine diphosphate-binding positions include 153–154, Asn181, Tyr290, and Glu371; that span reads GS. Asn181 contacts Mg(2+).

It belongs to the transketolase family. DXPS subfamily. In terms of assembly, homodimer. Mg(2+) serves as cofactor. It depends on thiamine diphosphate as a cofactor.

The enzyme catalyses D-glyceraldehyde 3-phosphate + pyruvate + H(+) = 1-deoxy-D-xylulose 5-phosphate + CO2. Its pathway is metabolic intermediate biosynthesis; 1-deoxy-D-xylulose 5-phosphate biosynthesis; 1-deoxy-D-xylulose 5-phosphate from D-glyceraldehyde 3-phosphate and pyruvate: step 1/1. In terms of biological role, catalyzes the acyloin condensation reaction between C atoms 2 and 3 of pyruvate and glyceraldehyde 3-phosphate to yield 1-deoxy-D-xylulose-5-phosphate (DXP). The protein is 1-deoxy-D-xylulose-5-phosphate synthase of Haemophilus influenzae (strain PittGG).